A 484-amino-acid chain; its full sequence is Xylulose kinase (484 aa).

A substrate-binding site is contributed by 77 to 78 (MH). D233 functions as the Proton acceptor in the catalytic mechanism.

Belongs to the FGGY kinase family. In terms of assembly, homodimer.

It catalyses the reaction D-xylulose + ATP = D-xylulose 5-phosphate + ADP + H(+). It carries out the reaction 1-deoxy-D-xylulose + ATP = 1-deoxy-D-xylulose 5-phosphate + ADP + H(+). Sugar binding is accompanied by a dramatic hinge-bending movement that enhances interactions with Mg-ATP. Its function is as follows. Catalyzes the phosphorylation of D-xylulose to D-xylulose 5-phosphate. Also catalyzes the phosphorylation of 1-deoxy-D-xylulose to 1-deoxy-D-xylulose 5-phosphate, with lower efficiency. Can also use D-ribulose, xylitol and D-arabitol, but D-xylulose is preferred over the other substrates. Has a weak substrate-independent Mg-ATP-hydrolyzing activity. In Escherichia coli (strain K12), this protein is Xylulose kinase.